Consider the following 364-residue polypeptide: 3-isopropylmalate dehydrogenase (364 aa).

Residue 78-91 (GKKWDNFPIEERPE) coordinates NAD(+). Residues Arg99, Arg109, Arg138, and Asp228 each contribute to the substrate site. Mg(2+)-binding residues include Asp228, Asp252, and Asp256. 286–298 (GSAPDIAGKNIAN) is an NAD(+) binding site.

The protein belongs to the isocitrate and isopropylmalate dehydrogenases family. LeuB type 1 subfamily. In terms of assembly, homodimer. Requires Mg(2+) as cofactor. The cofactor is Mn(2+).

Its subcellular location is the cytoplasm. The enzyme catalyses (2R,3S)-3-isopropylmalate + NAD(+) = 4-methyl-2-oxopentanoate + CO2 + NADH. It functions in the pathway amino-acid biosynthesis; L-leucine biosynthesis; L-leucine from 3-methyl-2-oxobutanoate: step 3/4. Functionally, catalyzes the oxidation of 3-carboxy-2-hydroxy-4-methylpentanoate (3-isopropylmalate) to 3-carboxy-4-methyl-2-oxopentanoate. The product decarboxylates to 4-methyl-2 oxopentanoate. This Buchnera aphidicola subsp. Uroleucon obscurum protein is 3-isopropylmalate dehydrogenase.